Reading from the N-terminus, the 126-residue chain is Large ribosomal subunit protein bL12 (126 aa).

It belongs to the bacterial ribosomal protein bL12 family. As to quaternary structure, homodimer. Part of the ribosomal stalk of the 50S ribosomal subunit. Forms a multimeric L10(L12)X complex, where L10 forms an elongated spine to which 2 to 4 L12 dimers bind in a sequential fashion. Binds GTP-bound translation factors.

Its function is as follows. Forms part of the ribosomal stalk which helps the ribosome interact with GTP-bound translation factors. Is thus essential for accurate translation. The protein is Large ribosomal subunit protein bL12 of Geotalea daltonii (strain DSM 22248 / JCM 15807 / FRC-32) (Geobacter daltonii).